A 314-amino-acid polypeptide reads, in one-letter code: Homoserine O-succinyltransferase (314 aa).

Cysteine 142 (acyl-thioester intermediate) is an active-site residue. The substrate site is built by lysine 163 and serine 192. Histidine 235 acts as the Proton acceptor in catalysis. Glutamate 237 is a catalytic residue. Arginine 249 is a substrate binding site.

This sequence belongs to the MetA family.

It is found in the cytoplasm. It carries out the reaction L-homoserine + succinyl-CoA = O-succinyl-L-homoserine + CoA. Its pathway is amino-acid biosynthesis; L-methionine biosynthesis via de novo pathway; O-succinyl-L-homoserine from L-homoserine: step 1/1. Its function is as follows. Transfers a succinyl group from succinyl-CoA to L-homoserine, forming succinyl-L-homoserine. This chain is Homoserine O-succinyltransferase, found in Shewanella sediminis (strain HAW-EB3).